The primary structure comprises 751 residues: Disintegrin and metalloproteinase domain-containing protein 2 (751 aa).

A signal peptide spans 1 to 16 (MLRVLFLLCGLSGLRT). Residues 17-173 (KENSERLHVQ…PYKVQSVQPR (157 aa)) constitute a propeptide that is removed on maturation. Over 17 to 702 (KENSERLHVQ…DVYQTAKPTR (686 aa)) the chain is Extracellular. N-linked (GlcNAc...) asparagine glycosylation is found at Asn122, Asn147, Asn219, and Asn289. Residues 177 to 374 (QYIEMHVVVE…QKSQCLQNLP (198 aa)) enclose the Peptidase M12B domain. 3 disulfide bridges follow: Cys286/Cys369, Cys328/Cys353, and Cys330/Cys335. N-linked (GlcNAc...) asparagine glycosylation is found at Asn352, Asn434, Asn458, Asn559, and Asn566. One can recognise a Disintegrin domain in the interval 383–472 (DAVCGNSIVE…LCPDDIVIQN (90 aa)). The cysteines at positions 444 and 464 are disulfide-linked. The 34-residue stretch at 612–645 (VNLGCTLQNCNNQGICNSLQHCHCNPTFLPPNCS) folds into the EGF-like domain. Cystine bridges form between Cys616-Cys627, Cys621-Cys633, and Cys635-Cys644. N-linked (GlcNAc...) asparagine glycosylation occurs at Asn643. Residues 703-723 (WPFFLLIPFFIILGALIAILV) traverse the membrane as a helical segment. At 724–751 (KVQFQRKKWKTEDYTSDEQFESDSELKE) the chain is on the cytoplasmic side. Phosphoserine is present on Ser745.

Heterodimer with ADAM1/fertilin subunit alpha. Post-translationally, the signal and the metalloprotease domain are cleaved during the epididymal maturation of the spermatozoa. In terms of tissue distribution, expressed specifically in testis.

The protein resides in the membrane. Its function is as follows. Sperm surface membrane protein that may be involved in sperm-egg plasma membrane adhesion and fusion during fertilization. Could have a direct role in sperm-zona binding or migration of sperm from the uterus into the oviduct. Interactions with egg membrane could be mediated via binding between its disintegrin-like domain to one or more integrins receptors on the egg. This is a non catalytic metalloprotease-like protein. This chain is Disintegrin and metalloproteinase domain-containing protein 2 (ADAM2), found in Oryctolagus cuniculus (Rabbit).